Consider the following 359-residue polypeptide: Peptide chain release factor 1 (359 aa).

An N5-methylglutamine modification is found at glutamine 236.

Belongs to the prokaryotic/mitochondrial release factor family. In terms of processing, methylated by PrmC. Methylation increases the termination efficiency of RF1.

It is found in the cytoplasm. Functionally, peptide chain release factor 1 directs the termination of translation in response to the peptide chain termination codons UAG and UAA. The sequence is that of Peptide chain release factor 1 from Ureaplasma parvum serovar 3 (strain ATCC 27815 / 27 / NCTC 11736).